The primary structure comprises 483 residues: MKLTREKWENNFSEWFDWVIREAEIYDYGRYPVKGMGVWLPYGFKIRQAAVDLIRKLLDAKGHEEVLFPLLVPEDLLRREGEHIKGFESEVFWVTKGGEENLDIRLALRPTSETAITYMETYWVQSYKQLPKKYYQIVSVFRYETKATRPMIRLREVSTFKEAHTLHETYEDAERQVKEAIEIYKNFFEELGIPYIMSQRPEWDKFAGAIYTIAFDTIMPDSRVLQIGTVHHLGQHFTKAFDLKVQRKDGTLDYPHQTSYGISDRVIAVAVSINGDDHGTILSPVLAPIKAVIIPIPAKDEKETEKIIEYSEDVAKILVSNGINTVIDKDTEKTPGEKYYIWEIKGVPLRIEIGPRELSSNSVFIKRRDTLQGISVKKENLVSEVVKLLETLRKDLKERAWNFLRSKIRYTDNLEEAKKMLDSKAGIVEVPWCESNECGLKIEETTGARVLGKPYDSPRDVSKSTCVVCKKPAKTTLRLAKTY.

This sequence belongs to the class-II aminoacyl-tRNA synthetase family. ProS type 3 subfamily. In terms of assembly, homodimer.

The protein localises to the cytoplasm. The enzyme catalyses tRNA(Pro) + L-proline + ATP = L-prolyl-tRNA(Pro) + AMP + diphosphate. In terms of biological role, catalyzes the attachment of proline to tRNA(Pro) in a two-step reaction: proline is first activated by ATP to form Pro-AMP and then transferred to the acceptor end of tRNA(Pro). This Sulfolobus acidocaldarius (strain ATCC 33909 / DSM 639 / JCM 8929 / NBRC 15157 / NCIMB 11770) protein is Proline--tRNA ligase.